Reading from the N-terminus, the 214-residue chain is Redox-sensing transcriptional repressor Rex (214 aa).

Positions 17–56 (LYYRIFKRFHADQVEKASSKQIADAMGIDSATVRRDFSYF) form a DNA-binding region, H-T-H motif. 91–96 (GCGNIG) contributes to the NAD(+) binding site.

It belongs to the transcriptional regulatory Rex family. As to quaternary structure, homodimer.

It localises to the cytoplasm. Its function is as follows. Modulates transcription in response to changes in cellular NADH/NAD(+) redox state. This chain is Redox-sensing transcriptional repressor Rex, found in Streptococcus pyogenes serotype M12 (strain MGAS9429).